Here is a 633-residue protein sequence, read N- to C-terminus: Dynein axonemal assembly factor 1 (633 aa).

Residues 1 to 80 are disordered; sequence MHPEASEPPV…SRDDRDDRGP (80 aa). Residues 22–42 are compositionally biased toward basic and acidic residues; sequence AGDHGDAGPGVRKEEINETKE. The segment covering 46-60 has biased composition (low complexity); sequence GPCTTSCQSQQQPSG. Over residues 70 to 80 the composition is skewed to basic and acidic residues; that stretch reads HSRDDRDDRGP. LRR repeat units follow at residues 101–123, 124–145, 146–167, 168–189, 190–211, and 215–236; these read ALND…EEYT, GLRC…QAQS, ELRC…EPLQ, KLDA…SCLP, VLNT…EHLR, and QLCV…SVLE. Positions 249–288 constitute an LRRCT domain; the sequence is NPVTKHIPNYRRTVTVRLKHLTYLDDRPVFPKDRACAEAW. Over residues 326-344 the composition is skewed to basic and acidic residues; sequence EERKKARDRGETPLPESEK. 2 disordered regions span residues 326 to 364 and 404 to 436; these read EERK…TQQK and LSGN…RTED. Position 349 is a phosphoserine (Ser-349). Over residues 352–364 the composition is skewed to basic and acidic residues; that stretch reads AQEKPPKGETQQK. Low complexity predominate over residues 413–427; that stretch reads TPVVVTPEEVTSPVE. Position 462 is a phosphothreonine (Thr-462). Ser-465 and Ser-488 each carry phosphoserine. Composition is skewed to polar residues over residues 538-555 and 568-592; these read TTDL…SSHP and GESN…SEGG. Residues 538-633 form a disordered region; that stretch reads TTDLETQSQD…GLEDIEFGLD (96 aa).

Belongs to the DNAAF1 family.

The protein localises to the cell projection. It localises to the cilium. Functionally, cilium-specific protein required for the stability of the ciliary architecture. Plays a role in cytoplasmic preassembly of dynein arms. Involved in regulation of microtubule-based cilia and actin-based brush border microvilli. In Rattus norvegicus (Rat), this protein is Dynein axonemal assembly factor 1 (Dnaaf1).